A 314-amino-acid polypeptide reads, in one-letter code: Methionyl-tRNA formyltransferase (314 aa).

113–116 (SLLP) serves as a coordination point for (6S)-5,6,7,8-tetrahydrofolate.

The protein belongs to the Fmt family.

It catalyses the reaction L-methionyl-tRNA(fMet) + (6R)-10-formyltetrahydrofolate = N-formyl-L-methionyl-tRNA(fMet) + (6S)-5,6,7,8-tetrahydrofolate + H(+). Functionally, attaches a formyl group to the free amino group of methionyl-tRNA(fMet). The formyl group appears to play a dual role in the initiator identity of N-formylmethionyl-tRNA by promoting its recognition by IF2 and preventing the misappropriation of this tRNA by the elongation apparatus. The chain is Methionyl-tRNA formyltransferase from Pseudomonas syringae pv. tomato (strain ATCC BAA-871 / DC3000).